Consider the following 430-residue polypeptide: F-box/kelch-repeat protein At4g33290 (430 aa).

In terms of domain architecture, F-box spans 1-44 (MITDLPKDLIEEILSRVSMTSMRVVRLTCKSWNTLSNSESFKKM). Kelch repeat units lie at residues 161-207 (LLRF…CVQG), 312-363 (VPFI…IIEE), and 383-430 (LVRI…RPTR).

The polypeptide is F-box/kelch-repeat protein At4g33290 (Arabidopsis thaliana (Mouse-ear cress)).